We begin with the raw amino-acid sequence, 93 residues long: Uteroglobin (93 aa).

The first 17 residues, 1 to 17 (MKLAITIILVMLSVCYS), serve as a signal peptide directing secretion.

It belongs to the secretoglobin family. As to quaternary structure, antiparallel homodimer; disulfide-linked. Interaction with LMBR1L is controversial.

It localises to the secreted. In terms of biological role, binds phosphatidylcholine, phosphatidylinositol, polychlorinated biphenyls (PCB) and weakly progesterone, potent inhibitor of phospholipase A2. This is Uteroglobin (SCGB1A1) from Neotomodon alstoni (Mexican volcano mouse).